We begin with the raw amino-acid sequence, 325 residues long: Peroxidase 68 (325 aa).

The signal sequence occupies residues Met-1–Ala-28. Gln-29 carries the pyrrolidone carboxylic acid modification. 4 disulfides stabilise this stretch: Cys-39–Cys-119, Cys-72–Cys-77, Cys-125–Cys-321, and Cys-205–Cys-230. His-70 acts as the Proton acceptor in catalysis. Residues Asp-71, Val-74, Gly-76, Asp-78, and Ser-80 each coordinate Ca(2+). Asn-99 carries an N-linked (GlcNAc...) asparagine glycan. Residue Pro-168 participates in substrate binding. A heme b-binding site is contributed by His-198. Residue Thr-199 participates in Ca(2+) binding. A glycan (N-linked (GlcNAc...) asparagine) is linked at Asn-214. Ca(2+) contacts are provided by Asp-245, Thr-248, and Asp-253.

Belongs to the peroxidase family. Classical plant (class III) peroxidase subfamily. Heme b is required as a cofactor. It depends on Ca(2+) as a cofactor.

The protein resides in the secreted. It catalyses the reaction 2 a phenolic donor + H2O2 = 2 a phenolic radical donor + 2 H2O. Removal of H(2)O(2), oxidation of toxic reductants, biosynthesis and degradation of lignin, suberization, auxin catabolism, response to environmental stresses such as wounding, pathogen attack and oxidative stress. These functions might be dependent on each isozyme/isoform in each plant tissue. The protein is Peroxidase 68 (PER68) of Arabidopsis thaliana (Mouse-ear cress).